A 194-amino-acid chain; its full sequence is Transposon Tn2501 resolvase (194 aa).

Residues 3–143 (RVFAYCRVST…SGIARAKATG (141 aa)) form the Resolvase/invertase-type recombinase catalytic domain. Catalysis depends on Ser11, which acts as the O-(5'-phospho-DNA)-serine intermediate. A DNA-binding region (H-T-H motif) is located at residues 170-189 (ISAIAREFNTTRQTILRVKA).

The protein belongs to the site-specific recombinase resolvase family.

Its function is as follows. Resolvase catalyzes the resolution (a site-specific recombination) of the cointegrated replicon to yield the final transposition products. The polypeptide is Transposon Tn2501 resolvase (tnpR) (Escherichia coli).